Reading from the N-terminus, the 295-residue chain is Protease HtpX (295 aa).

2 helical membrane-spanning segments follow: residues 4 to 24 and 42 to 62; these read ILLF…TLSL and QLLV…LFIS. Histidine 147 contacts Zn(2+). Residue glutamate 148 is part of the active site. Position 151 (histidine 151) interacts with Zn(2+). Transmembrane regions (helical) follow at residues 158–178 and 199–219; these read VTLA…ARII and ITTI…VMWF. Residue glutamate 224 coordinates Zn(2+).

It belongs to the peptidase M48B family. Zn(2+) serves as cofactor.

The protein resides in the cell inner membrane. This chain is Protease HtpX, found in Pseudomonas syringae pv. tomato (strain ATCC BAA-871 / DC3000).